We begin with the raw amino-acid sequence, 212 residues long: Root-specific lectin (212 aa).

An N-terminal signal peptide occupies residues 1-26; the sequence is MKMMSTRALALGAAAVLAFAAATAHA. Residue glutamine 27 is modified to Pyrrolidone carboxylic acid. Chitin-binding type-1 domains are found at residues 27-68, 69-111, 112-154, and 155-197; these read QRCG…ACYT, SKRC…PCRA, DIKC…ACST, and DKPC…GCDG. Disulfide bonds link cysteine 29/cysteine 44, cysteine 38/cysteine 50, cysteine 43/cysteine 57, cysteine 61/cysteine 66, cysteine 72/cysteine 87, cysteine 81/cysteine 93, cysteine 86/cysteine 100, cysteine 104/cysteine 109, cysteine 115/cysteine 130, cysteine 124/cysteine 136, cysteine 129/cysteine 143, cysteine 147/cysteine 152, cysteine 158/cysteine 173, cysteine 167/cysteine 179, cysteine 172/cysteine 186, and cysteine 190/cysteine 195. 36-38 is a substrate binding site; the sequence is MEC. Residue 88-99 participates in substrate binding; that stretch reads SQWGYCGFGAEY. 140–141 lines the substrate pocket; it reads SE. The N-linked (GlcNAc...) asparagine glycan is linked to asparagine 206.

In roots.

Functionally, carbohydrate binding. The protein is Root-specific lectin of Hordeum vulgare (Barley).